A 67-amino-acid chain; its full sequence is ACQASQLAVCASAILSGAKPSGECCGNLRAQQPCFCQYAKDPTYGQYIRSPHARDTLQSCGLAVPHC.

4 disulfides stabilise this stretch: Cys-2–Cys-34, Cys-10–Cys-24, Cys-25–Cys-60, and Cys-36–Cys-67.

Transfer lipids across membranes. May play a role in plant defense or in the biosynthesis of cuticle layers. The chain is Non-specific lipid-transfer protein 2P from Triticum aestivum (Wheat).